The primary structure comprises 201 residues: Peroxiredoxin-2F, mitochondrial (201 aa).

A mitochondrion-targeting transit peptide spans 1-30 (MAMSILKLRNLSALRSAANSARIGVSSRGF). At Thr-37 the chain carries Phosphothreonine. Residues 37 to 201 (TDITSAAPGV…TGAEVILGQI (165 aa)) form the Thioredoxin domain. The active-site Cysteine sulfenic acid (-SOH) intermediate is the Cys-89. Ser-149 is modified (phosphoserine).

It belongs to the peroxiredoxin family. Prx5 subfamily. Monomer. In terms of tissue distribution, expressed in the whole plant.

The protein resides in the mitochondrion matrix. It carries out the reaction [glutaredoxin]-dithiol + a hydroperoxide = [glutaredoxin]-disulfide + an alcohol + H2O. In terms of biological role, thiol-specific peroxidase that catalyzes the reduction of hydrogen peroxide and organic hydroperoxides to water and alcohols, respectively. Plays a role in cell protection against oxidative stress by detoxifying peroxides. Reduces preferentially hydrogen peroxide rather than alkyl peroxides. May be involved in mitochondrial redox homeostasis. In Arabidopsis thaliana (Mouse-ear cress), this protein is Peroxiredoxin-2F, mitochondrial (PRXIIF).